We begin with the raw amino-acid sequence, 472 residues long: 3-isopropylmalate dehydratase large subunit (472 aa).

Residues cysteine 349, cysteine 409, and cysteine 412 each coordinate [4Fe-4S] cluster.

The protein belongs to the aconitase/IPM isomerase family. LeuC type 1 subfamily. In terms of assembly, heterodimer of LeuC and LeuD. Requires [4Fe-4S] cluster as cofactor.

The catalysed reaction is (2R,3S)-3-isopropylmalate = (2S)-2-isopropylmalate. The protein operates within amino-acid biosynthesis; L-leucine biosynthesis; L-leucine from 3-methyl-2-oxobutanoate: step 2/4. Functionally, catalyzes the isomerization between 2-isopropylmalate and 3-isopropylmalate, via the formation of 2-isopropylmaleate. The sequence is that of 3-isopropylmalate dehydratase large subunit from Rhodospirillum rubrum (strain ATCC 11170 / ATH 1.1.1 / DSM 467 / LMG 4362 / NCIMB 8255 / S1).